Reading from the N-terminus, the 446-residue chain is GTPase Der (446 aa).

2 EngA-type G domains span residues 3–167 and 180–353; these read PVLA…AFDE and IRLA…ASAT. GTP is bound by residues 9–16, 56–60, 119–122, 186–193, 233–237, and 298–301; these read GRPNVGKS, DTGGF, NKAE, DTAGL, and NKWD. Residues 354 to 438 form the KH-like domain; sequence KKLATPVLTR…PMRIEMKSSR (85 aa).

Belongs to the TRAFAC class TrmE-Era-EngA-EngB-Septin-like GTPase superfamily. EngA (Der) GTPase family. In terms of assembly, associates with the 50S ribosomal subunit.

Functionally, GTPase that plays an essential role in the late steps of ribosome biogenesis. The sequence is that of GTPase Der from Methylibium petroleiphilum (strain ATCC BAA-1232 / LMG 22953 / PM1).